A 178-amino-acid polypeptide reads, in one-letter code: uncharacterized protein (178 aa).

Residues 1-16 (MNKRTSVDASKEDLHP) show a composition bias toward basic and acidic residues. The tract at residues 1–43 (MNKRTSVDASKEDLHPADPQSGEGVPPNRKNTKTSPRGEGTAP) is disordered.

This is an uncharacterized protein from Homo sapiens (Human).